Here is a 350-residue protein sequence, read N- to C-terminus: Chorismate synthase (350 aa).

An NADP(+)-binding site is contributed by arginine 48. FMN contacts are provided by residues 125-127, glycine 277, 292-296, and arginine 318; these read RSS and KPIPS.

Belongs to the chorismate synthase family. Homotetramer. The cofactor is FMNH2.

It catalyses the reaction 5-O-(1-carboxyvinyl)-3-phosphoshikimate = chorismate + phosphate. The protein operates within metabolic intermediate biosynthesis; chorismate biosynthesis; chorismate from D-erythrose 4-phosphate and phosphoenolpyruvate: step 7/7. Functionally, catalyzes the anti-1,4-elimination of the C-3 phosphate and the C-6 proR hydrogen from 5-enolpyruvylshikimate-3-phosphate (EPSP) to yield chorismate, which is the branch point compound that serves as the starting substrate for the three terminal pathways of aromatic amino acid biosynthesis. This reaction introduces a second double bond into the aromatic ring system. The polypeptide is Chorismate synthase (Maridesulfovibrio salexigens (strain ATCC 14822 / DSM 2638 / NCIMB 8403 / VKM B-1763) (Desulfovibrio salexigens)).